The sequence spans 355 residues: N-acylethanolamine-hydrolyzing acid amidase (355 aa).

The first 17 residues, 1–17 (MLLLQIILLLLPVICSA), serve as a signal peptide directing secretion. Catalysis depends on cysteine 122, which acts as the Nucleophile. 3 N-linked (GlcNAc...) asparagine glycosylation sites follow: asparagine 150, asparagine 160, and asparagine 328.

The protein belongs to the acid ceramidase family. As to quaternary structure, heterodimer of an alpha and a beta subunit, produced by autocatalytic cleavage. N-glycosylated. In terms of processing, autoproteolytic cleavage at pH 4.5 gives rise to the alpha and beta subunit. Cleavage gives rise to a conformation change that activates the enzyme. The same catalytic Cys residue mediates the autoproteolytic cleavage and subsequent hydrolysis of lipid substrates.

It is found in the lysosome. The protein localises to the membrane. It catalyses the reaction N-hexadecanoylethanolamine + H2O = ethanolamine + hexadecanoate. The enzyme catalyses an N-(long-chain fatty acyl)ethanolamine + H2O = a long-chain fatty acid + ethanolamine. The protein operates within lipid metabolism; fatty acid metabolism. Degrades bioactive fatty acid amides, such as N-palmitoylethanolamine, to ethanolamine and free fatty acids. This Caenorhabditis elegans protein is N-acylethanolamine-hydrolyzing acid amidase.